Reading from the N-terminus, the 702-residue chain is MADS-box MEF2 type transcription factor MIG1 (702 aa).

The MADS-box domain occupies 1–61 (MGRRKIEIKA…KKLYEYSSGD (61 aa)). Disordered stretches follow at residues 73-608 (GGAT…NIDT) and 658-702 (PSFL…KVDS). Residues 86–96 (GGDDDDEEEGD) are compositionally biased toward acidic residues. Over residues 132–144 (ASPPIPNGVPFPP) the composition is skewed to pro residues. Low complexity predominate over residues 145-155 (HGHGVPRGHTP). The span at 180–195 (GSPQVNGFGFGQQQSM) shows a compositional bias: polar residues. Pro residues predominate over residues 201–241 (TTMPPHMPPQMAPGPPFPYPQHPQHPPHPPHPPHPPHPQQP). 3 stretches are compositionally biased toward low complexity: residues 273-284 (PMGMQRHSVSPP), 326-343 (ESPQQIEPPQHQHQQQPE), and 350-371 (EQQQQQQQSQQSQQPQEPQSEP). Polar residues predominate over residues 456 to 465 (VDESTSNASE). Composition is skewed to low complexity over residues 487 to 512 (RASISSVSSAPESAPAPPSRSNSLRA) and 530 to 553 (DGSGSATAESASSAQGGASTDATS). Residues 554–567 (QSTRQNDSHSSTNM) are compositionally biased toward polar residues. Residues 587–600 (PPNPFAPKRPPQHP) show a composition bias toward pro residues. Basic and acidic residues predominate over residues 693-702 (NEPKRVKVDS).

Belongs to the MEF2 family. As to quaternary structure, interacts with MAPK MPS1.

The protein resides in the nucleus. Its function is as follows. Transcription factor acting downstream of the MPS1 MAP kinase (MAPK) cascade during conidiation and plant infection. Required for overcoming plant defense responses and the differentiation of secondary infectious hyphae in live plant cells. This chain is MADS-box MEF2 type transcription factor MIG1, found in Pyricularia oryzae (strain 70-15 / ATCC MYA-4617 / FGSC 8958) (Rice blast fungus).